The primary structure comprises 189 residues: GTP cyclohydrolase 1 (189 aa).

Residues C78, H81, and C150 each coordinate Zn(2+).

This sequence belongs to the GTP cyclohydrolase I family. As to quaternary structure, homomer.

The enzyme catalyses GTP + H2O = 7,8-dihydroneopterin 3'-triphosphate + formate + H(+). The protein operates within cofactor biosynthesis; 7,8-dihydroneopterin triphosphate biosynthesis; 7,8-dihydroneopterin triphosphate from GTP: step 1/1. The polypeptide is GTP cyclohydrolase 1 (Listeria monocytogenes serotype 4a (strain HCC23)).